Consider the following 242-residue polypeptide: Type III pantothenate kinase (242 aa).

D7–K14 contacts ATP. Residues Y88 and G95–R98 each bind substrate. D97 (proton acceptor) is an active-site residue. Residue D117 participates in K(+) binding. Position 120 (T120) interacts with ATP. T172 contacts substrate.

This sequence belongs to the type III pantothenate kinase family. In terms of assembly, homodimer. It depends on NH4(+) as a cofactor. K(+) is required as a cofactor.

Its subcellular location is the cytoplasm. It catalyses the reaction (R)-pantothenate + ATP = (R)-4'-phosphopantothenate + ADP + H(+). It participates in cofactor biosynthesis; coenzyme A biosynthesis; CoA from (R)-pantothenate: step 1/5. Its function is as follows. Catalyzes the phosphorylation of pantothenate (Pan), the first step in CoA biosynthesis. In Akkermansia muciniphila (strain ATCC BAA-835 / DSM 22959 / JCM 33894 / BCRC 81048 / CCUG 64013 / CIP 107961 / Muc), this protein is Type III pantothenate kinase.